Reading from the N-terminus, the 309-residue chain is Homoserine O-succinyltransferase (309 aa).

Cys142 (acyl-thioester intermediate) is an active-site residue. Substrate contacts are provided by Lys163 and Ser192. Residue His235 is the Proton acceptor of the active site. Glu237 is an active-site residue. Substrate is bound at residue Arg249.

It belongs to the MetA family. As to quaternary structure, homodimer.

The protein localises to the cytoplasm. It catalyses the reaction L-homoserine + succinyl-CoA = O-succinyl-L-homoserine + CoA. It functions in the pathway amino-acid biosynthesis; L-methionine biosynthesis via de novo pathway; O-succinyl-L-homoserine from L-homoserine: step 1/1. In terms of biological role, transfers a succinyl group from succinyl-CoA to L-homoserine, forming succinyl-L-homoserine. The polypeptide is Homoserine O-succinyltransferase (Escherichia coli O139:H28 (strain E24377A / ETEC)).